Consider the following 132-residue polypeptide: Fluoride-specific ion channel FluC (132 aa).

Transmembrane regions (helical) follow at residues 5 to 25, 32 to 52, 70 to 90, and 105 to 125; these read LYIA…SGLV, TFPW…GFFA, FVMT…LQTL, and VVGS…AAVG. Positions 77 and 80 each coordinate Na(+).

The protein belongs to the fluoride channel Fluc/FEX (TC 1.A.43) family.

The protein resides in the cell inner membrane. It carries out the reaction fluoride(in) = fluoride(out). With respect to regulation, na(+) is not transported, but it plays an essential structural role and its presence is essential for fluoride channel function. Its function is as follows. Fluoride-specific ion channel. Important for reducing fluoride concentration in the cell, thus reducing its toxicity. The protein is Fluoride-specific ion channel FluC of Opitutus terrae (strain DSM 11246 / JCM 15787 / PB90-1).